Here is a 510-residue protein sequence, read N- to C-terminus: NAD(P)H-quinone oxidoreductase subunit 2 B, chloroplastic (510 aa).

13 consecutive transmembrane segments (helical) span residues Leu-24–Leu-44, Ile-57–Phe-77, Ile-99–Ile-119, Met-124–Cys-144, Leu-149–Tyr-169, Tyr-183–Gly-203, Pro-227–Ala-247, Trp-295–Ile-315, Met-323–Asp-343, Tyr-354–Leu-374, Ala-395–Phe-415, Leu-418–Leu-438, and Met-484–Ile-504.

This sequence belongs to the complex I subunit 2 family. NDH is composed of at least 16 different subunits, 5 of which are encoded in the nucleus.

The protein resides in the plastid. It is found in the chloroplast thylakoid membrane. It carries out the reaction a plastoquinone + NADH + (n+1) H(+)(in) = a plastoquinol + NAD(+) + n H(+)(out). The enzyme catalyses a plastoquinone + NADPH + (n+1) H(+)(in) = a plastoquinol + NADP(+) + n H(+)(out). Functionally, NDH shuttles electrons from NAD(P)H:plastoquinone, via FMN and iron-sulfur (Fe-S) centers, to quinones in the photosynthetic chain and possibly in a chloroplast respiratory chain. The immediate electron acceptor for the enzyme in this species is believed to be plastoquinone. Couples the redox reaction to proton translocation, and thus conserves the redox energy in a proton gradient. This is NAD(P)H-quinone oxidoreductase subunit 2 B, chloroplastic from Lactuca sativa (Garden lettuce).